A 474-amino-acid polypeptide reads, in one-letter code: MLRNTHLVLPFILYLLFRLSHFLLEVPTVRMIELAACHQHLRLDHGPLNEAACKTPPVQEHVSLVVGWKMTFDSIPGLMSILYFGTLADKSGHRAILRLCCVGYLLAILWVLITCLFHQVFPVELVLLSSLFLFIGGGQLVFAAVITAFVADLFPPPSRTKFLFLLAAMPHMDKVASPALATKLMEQNLFLPSLVSMAIVVICVALLQMSDVGRETAASKVVGSTSDQTEPFLRSSSNSSQESGTAAPAIDPEQARGPFRQLKNIICWVHREPVLFICYLCFFLKSNAMASEAFIFQYLSEKFGWPLRETTVMRLALSSGAVISTLIICPLANATLHNRGVASARINIGAVHASSIVLVASFIMAWQASSSTAFIFSMLAAGFGEGLEPALQGVLAAASQTKAKGSIFALMCTCSLLGDMTGGPLMSALMSIGRGGNGVSDGYCFLASALVFGAVIVLAHLLWALGAEEMLGED.

A run of 6 helical transmembrane segments spans residues 7–27, 64–84, 101–121, 131–151, 162–182, and 189–209; these read LVLP…LEVP, LVVG…ILYF, CVGY…HQVF, LFLF…AFVA, FLFL…ALAT, and LFLP…LLQM. The tract at residues 220–252 is disordered; that stretch reads KVVGSTSDQTEPFLRSSSNSSQESGTAAPAIDP. A compositionally biased stretch (polar residues) spans 222–244; sequence VGSTSDQTEPFLRSSSNSSQESG. An N-linked (GlcNAc...) asparagine glycan is attached at N238. A run of 6 helical transmembrane segments spans residues 276–296, 315–335, 346–366, 374–394, 406–426, and 445–465; these read FICY…AFIF, LALS…ANAT, INIG…IMAW, FIFS…LQGV, SIFA…GPLM, and FLAS…LWAL.

It belongs to the major facilitator superfamily.

It localises to the cell membrane. Functionally, MFS transporter; part of the satratoxin SC3 cluster involved in the biosynthesis of satratoxins, trichothecene mycotoxins that are associated with human food poisonings. Satratoxins are suggested to be made by products of multiple gene clusters (SC1, SC2 and SC3) that encode 21 proteins in all, including polyketide synthases, acetyltransferases, and other enzymes expected to modify the trichothecene skeleton. SC1 encodes 10 proteins, SAT1 to SAT10. The largest are SAT8, which encodes a putative polyketide synthase (PKS) with a conventional non-reducing architecture, and SAT10, a putative protein containing four ankyrin repeats and thus may be involved in protein scaffolding. The putative short-chain reductase SAT3 may assist the PKS in some capacity. SAT6 contains a secretory lipase domain and acts probably as a trichothecene esterase. SAT5 encodes a putative acetyltransferase, and so, with SAT6, may affect endogenous protection from toxicity. The probable transcription factor SAT9 may regulate the expression of the SC1 cluster. SC2 encodes proteins SAT11 to SAT16, the largest of which encodes the putative reducing PKS SAT13. SAT11 is a cytochrome P450 monooxygenase, while SAT14 and SAT16 are probable acetyltransferases. The SC2 cluster may be regulated by the transcription factor SAT15. SC3 is a small cluster that encodes 5 proteins, SAT17 to SAT21. SAT21 is a putative MFS-type transporter which may have a role in exporting secondary metabolites. The four other proteins putatively encoded in SC3 include the taurine hydroxylase-like protein SAT17, the O-methyltransferase SAT18, the acetyltransferase SAT19, and the Cys6-type zinc finger SAT20, the latter being probably involved in regulation of SC3 expression. This Stachybotrys chartarum (strain CBS 109288 / IBT 7711) (Toxic black mold) protein is MFS transporter SAT21.